The chain runs to 427 residues: Protein TIFY 6a (427 aa).

Basic and acidic residues predominate over residues 1–25; sequence MERDFLGAIGRKEEAAGKPEEHSDY. The disordered stretch occupies residues 1–33; that stretch reads MERDFLGAIGRKEEAAGKPEEHSDYRGGGGGAS. The Tify domain occupies 196-231; the sequence is QNPKVTQMTIFYDGLVNVFDNIPVEKAQELMLLASR. Composition is skewed to polar residues over residues 293–303 and 317–327; these read LPKSSSSSNDS and PLSQASPSQPI. The segment at 293–327 is disordered; it reads LPKSSSSSNDSAGPKSGGLPLAVTPLSQASPSQPI. The Jas motif lies at 343-367; the sequence is PQARKASLARFLEKRKERVSSVAPY. Residues 345-352 carry the Nuclear localization signal motif; it reads ARKASLAR. Residues 360–427 form a disordered region; that stretch reads RVSSVAPYPS…QEPPSTKLQI (68 aa). Composition is skewed to polar residues over residues 369–402 and 411–427; these read SSKS…NNCE and RNIS…KLQI.

Belongs to the TIFY/JAZ family. Ubiquitinated.

It is found in the nucleus. In terms of biological role, repressor of jasmonate responses. The chain is Protein TIFY 6a from Oryza sativa subsp. indica (Rice).